The sequence spans 395 residues: NADH-quinone oxidoreductase subunit D (395 aa).

It belongs to the complex I 49 kDa subunit family. NDH-1 is composed of 14 different subunits. Subunits NuoB, C, D, E, F, and G constitute the peripheral sector of the complex.

Its subcellular location is the cell inner membrane. It carries out the reaction a quinone + NADH + 5 H(+)(in) = a quinol + NAD(+) + 4 H(+)(out). Functionally, NDH-1 shuttles electrons from NADH, via FMN and iron-sulfur (Fe-S) centers, to quinones in the respiratory chain. The immediate electron acceptor for the enzyme in this species is believed to be a menaquinone. Couples the redox reaction to proton translocation (for every two electrons transferred, four hydrogen ions are translocated across the cytoplasmic membrane), and thus conserves the redox energy in a proton gradient. This is NADH-quinone oxidoreductase subunit D from Chlorobium luteolum (strain DSM 273 / BCRC 81028 / 2530) (Pelodictyon luteolum).